We begin with the raw amino-acid sequence, 209 residues long: Adenylate kinase (209 aa).

59 to 64 (GSGKRT) serves as a coordination point for ATP. The segment at 79–108 (SSGQVLTRGVESGSETSQLAHSYVSRGERV) is NMP. AMP is bound by residues Ser-80, 106–108 (ERV), 135–138 (GYPR), and Gln-142. An LID region spans residues 172–205 (HRRYDPATNKXYHMLDNPPPGGRCRVMRTAPAEG). Arg-173 contacts ATP.

Belongs to the adenylate kinase family. As to quaternary structure, monomer.

It is found in the cytoplasm. The enzyme catalyses AMP + ATP = 2 ADP. Its function is as follows. Catalyzes the reversible transfer of the terminal phosphate group between ATP and AMP. Plays an important role in cellular energy homeostasis and in adenine nucleotide metabolism. This Trypanosoma brucei rhodesiense protein is Adenylate kinase.